The chain runs to 356 residues: tRNA pseudouridine synthase D (356 aa).

The active-site Nucleophile is the Asp-84. Residues 159-302 (GVPNYYGPQR…RRGARRPIRV (144 aa)) enclose the TRUD domain.

This sequence belongs to the pseudouridine synthase TruD family.

The catalysed reaction is uridine(13) in tRNA = pseudouridine(13) in tRNA. In terms of biological role, responsible for synthesis of pseudouridine from uracil-13 in transfer RNAs. This is tRNA pseudouridine synthase D from Thermus thermophilus (strain ATCC BAA-163 / DSM 7039 / HB27).